A 389-amino-acid polypeptide reads, in one-letter code: Basigin (389 aa).

The N-terminal stretch at 1–21 (MAAALLLALAFTLLSGQGACA) is a signal peptide. Topologically, residues 22 to 325 (AAGFLKAPLS…ETISLRVRSR (304 aa)) are extracellular. An Ig-like domain is found at 37–120 (GGSVVLHCEA…SSDPDRNHLT (84 aa)). Cystine bridges form between C44–C108, C157–C203, and C242–C305. The 82-residue stretch at 138 to 219 (EPGTIQTSVQ…VGRSEINVEG (82 aa)) folds into the Ig-like C2-type domain. Residues N160, N270, and N306 are each glycosylated (N-linked (GlcNAc...) asparagine). Positions 221-319 (PRIKVGKKSE…AQGTTRETIS (99 aa)) constitute an Ig-like V-type domain. A helical membrane pass occupies residues 326–349 (MAALWPFLGIVAEVLVLVTIIFIY). Residues 350 to 389 (EKRRKPDQTLDEDDPGAAPLKGSGTHMNDKDKNVRQRNAT) lie on the Cytoplasmic side of the membrane. The interval 356–389 (DQTLDEDDPGAAPLKGSGTHMNDKDKNVRQRNAT) is disordered. T358 carries the post-translational modification Phosphothreonine. S372 bears the Phosphoserine mark.

In terms of assembly, interacts with NXNL1. Interacts with SLC2A1 and SLC16A1/GLUT1. Interacts with XKR8; promoting its localization at the cell membrane. Interacts with ATP1B2, MAG and L1CAM. Interacts with SLC16A7. Interacts with VEGFA, KDR/VEGFR2, PPIA/CYPA, SLC1A3, SLC16A11 and SLC16A12. Interacts with PPIL2; regulates BSG transport to the cell membrane. Interacts with SLC16A1; interaction mediates SLC16A1 targeting to the plasma membrane. Interacts with SLC16A3; interaction mediates SLC16A3 targeting to the plasma membrane. As to quaternary structure, interacts with SLC16A6; this interaction mediates targeting to the plasma membrane. N-glycosylated. In terms of processing, N-glycosylated. During spermatogenesis, probably deglycosylated during epididymal transit. In terms of tissue distribution, retina-specific. Expressed in both rods and cones (at protein level). As to expression, testis and caput, corpus and cauda epididymides (at protein level). Expressed in the brain, lung, liver, kidney, heart, spleen, uterus, retina and skeletal muscle.

It is found in the cell membrane. The protein localises to the photoreceptor inner segment. Its subcellular location is the cell projection. The protein resides in the cilium. It localises to the photoreceptor outer segment. It is found in the endoplasmic reticulum membrane. The protein localises to the basolateral cell membrane. In terms of biological role, essential for normal retinal maturation and development. Acts as a retinal cell surface receptor for NXNL1 and plays an important role in NXNL1-mediated survival of retinal cone photoreceptors. In association with glucose transporter SLC16A1/GLUT1 and NXNL1, promotes retinal cone survival by enhancing aerobic glycolysis and accelerating the entry of glucose into photoreceptors. Functionally, signaling receptor for cyclophilins, essential for PPIA/CYPA and PPIB/CYPB-dependent signaling related to chemotaxis and adhesion of immune cells. Plays an important role in targeting the monocarboxylate transporters SLC16A1, SLC16A3 and SLC16A8 to the plasma membrane. Acts as a coreceptor for vascular endothelial growth factor receptor 2 (KDR/VEGFR2) in endothelial cells enhancing its VEGFA-mediated activation and downstream signaling. Promotes angiogenesis through EPAS1/HIF2A-mediated up-regulation of VEGFA and KDR/VEGFR2 in endothelial cells. Plays an important role in spermatogenesis; mediates interactions between germ cells and Sertoli cell and is essential for the development/differentiation of germ cells to round spermatids. The protein is Basigin (Bsg) of Mus musculus (Mouse).